The primary structure comprises 194 residues: Large ribosomal subunit protein bL25 (194 aa).

Belongs to the bacterial ribosomal protein bL25 family. CTC subfamily. In terms of assembly, part of the 50S ribosomal subunit; part of the 5S rRNA/L5/L18/L25 subcomplex. Contacts the 5S rRNA. Binds to the 5S rRNA independently of L5 and L18.

In terms of biological role, this is one of the proteins that binds to the 5S RNA in the ribosome where it forms part of the central protuberance. This Neorickettsia sennetsu (strain ATCC VR-367 / Miyayama) (Ehrlichia sennetsu) protein is Large ribosomal subunit protein bL25.